A 547-amino-acid polypeptide reads, in one-letter code: Chaperonin GroEL (547 aa).

ATP is bound by residues 30-33 (TLGP), Lys51, 87-91 (DGTTT), Gly415, 479-481 (NAA), and Asp495.

The protein belongs to the chaperonin (HSP60) family. In terms of assembly, forms a cylinder of 14 subunits composed of two heptameric rings stacked back-to-back. Interacts with the co-chaperonin GroES.

The protein localises to the cytoplasm. It carries out the reaction ATP + H2O + a folded polypeptide = ADP + phosphate + an unfolded polypeptide.. Its function is as follows. Together with its co-chaperonin GroES, plays an essential role in assisting protein folding. The GroEL-GroES system forms a nano-cage that allows encapsulation of the non-native substrate proteins and provides a physical environment optimized to promote and accelerate protein folding. The chain is Chaperonin GroEL from Pseudomonas fluorescens (strain ATCC BAA-477 / NRRL B-23932 / Pf-5).